The primary structure comprises 190 residues: Threonylcarbamoyl-AMP synthase (190 aa).

In terms of domain architecture, YrdC-like spans Arg-8–Ala-190.

It belongs to the SUA5 family. TsaC subfamily.

The protein localises to the cytoplasm. It carries out the reaction L-threonine + hydrogencarbonate + ATP = L-threonylcarbamoyladenylate + diphosphate + H2O. Required for the formation of a threonylcarbamoyl group on adenosine at position 37 (t(6)A37) in tRNAs that read codons beginning with adenine. Catalyzes the conversion of L-threonine, HCO(3)(-)/CO(2) and ATP to give threonylcarbamoyl-AMP (TC-AMP) as the acyladenylate intermediate, with the release of diphosphate. The chain is Threonylcarbamoyl-AMP synthase from Alkalilimnicola ehrlichii (strain ATCC BAA-1101 / DSM 17681 / MLHE-1).